Here is a 220-residue protein sequence, read N- to C-terminus: Ras-related protein Rab-3A (220 aa).

Residues S31, S32, V33, G34, K35, T36, S37, T48, P49, S53, and T54 each contribute to the GTP site. A Mg(2+)-binding site is contributed by T36. The short motif at 49–58 (PAFVSTVGID) is the Switch 1 element. Residues T54 and D77 each contribute to the Mg(2+) site. GTP is bound at residue G80. The Switch 2 signature appears at 80 to 96 (GQERYRTITTAYYRGAM). T86 carries the post-translational modification Phosphothreonine; by LRRK2. GTP is bound by residues N135, K136, D138, A166, and K167. Residues S188 and S190 each carry the phosphoserine modification. A disordered region spans residues 194-220 (ADPAVTGAKQGPQLSDQQVPPHQDCAC). S-geranylgeranyl cysteine attachment occurs at residues C218 and C220. C220 is subject to Cysteine methyl ester.

Belongs to the small GTPase superfamily. Rab family. Interacts with RIMS1 and RIMS2. Interacts with Rabphilin-3A/RPH3A and Rab effector Noc2/RPH3AL. Interacts with SYTL4. Interacts with RAB3IP. Interacts with SGSM1 and SGSM3. Interacts with SYT1. Interacts with MYH9; this interaction is essential for lysosome exocytosis and plasma membrane repair. Interacts with STXBP1; this interaction promotes RAB3A dissociation from the vesicle membrane. Interacts with SNCA. The GTP-bound form interacts with REP15. Interacts with GDI1, GDI2, CHM and CHML; phosphorylation at Thr-86 disrupts these interactions. Interacts with MADD (via uDENN domain); the GTP-bound form is preferred for interaction. It depends on Mg(2+) as a cofactor. Phosphorylation of Thr-86 in the switch II region by LRRK2 prevents the association of RAB regulatory proteins, including CHM, CHML and RAB GDP dissociation inhibitors GDI1 and GDI2. In terms of tissue distribution, specifically expressed in brain.

It localises to the cytoplasm. The protein resides in the cytosol. It is found in the lysosome. The protein localises to the cytoplasmic vesicle. Its subcellular location is the secretory vesicle. It localises to the cell projection. The protein resides in the axon. It is found in the cell membrane. The protein localises to the presynapse. Its subcellular location is the postsynapse. It catalyses the reaction GTP + H2O = GDP + phosphate + H(+). Regulated by guanine nucleotide exchange factors (GEFs) including RAB3IL1 and MADD which promote the exchange of bound GDP for free GTP. Regulated by GTPase activating proteins (GAPs) including RAB3GAP1 and TBC1D10B which increase the GTP hydrolysis activity. Inhibited by GDP dissociation inhibitors (GDIs) which prevent Rab-GDP dissociation. Its function is as follows. The small GTPases Rab are key regulators of intracellular membrane trafficking, from the formation of transport vesicles to their fusion with membranes. Rabs cycle between an inactive GDP-bound form and an active GTP-bound form that is able to recruit to membranes different sets of downstream effectors directly responsible for vesicle formation, movement, tethering and fusion. RAB3A plays a central role in regulated exocytosis and secretion. Controls the recruitment, tethering and docking of secretory vesicles to the plasma membrane. Upon stimulation, switches to its active GTP-bound form, cycles to vesicles and recruits effectors such as RIMS1, RIMS2, Rabphilin-3A/RPH3A, RPH3AL or SYTL4 to help the docking of vesicules onto the plasma membrane. Upon GTP hydrolysis by GTPase-activating protein, dissociates from the vesicle membrane allowing the exocytosis to proceed. Stimulates insulin secretion through interaction with RIMS2 or RPH3AL effectors in pancreatic beta cells. Regulates calcium-dependent lysosome exocytosis and plasma membrane repair (PMR) via the interaction with 2 effectors, SYTL4 and myosin-9/MYH9. Acts as a positive regulator of acrosome content secretion in sperm cells by interacting with RIMS1. Also plays a role in the regulation of dopamine release by interacting with synaptotagmin I/SYT. The polypeptide is Ras-related protein Rab-3A (Homo sapiens (Human)).